The chain runs to 84 residues: UPF0410 protein YmgE (84 aa).

The next 3 membrane-spanning stretches (helical) occupy residues 1-21 (MGII…KLIM), 27-47 (GGFF…GWLA), and 58-78 (GFNL…LGVF).

It belongs to the UPF0410 family.

The protein resides in the cell inner membrane. The sequence is that of UPF0410 protein YmgE (ymgE) from Escherichia coli O127:H6 (strain E2348/69 / EPEC).